A 274-amino-acid polypeptide reads, in one-letter code: Putative ankyrin repeat protein R597 (274 aa).

ANK repeat units lie at residues 78-112 (VGLP…NNND), 114-144 (PISE…SLKI), 146-174 (SRYH…DIQG), and 176-205 (NLSY…NIND).

The sequence is that of Putative ankyrin repeat protein R597 from Acanthamoeba polyphaga mimivirus (APMV).